Reading from the N-terminus, the 452-residue chain is Keratin, type I cytoskeletal 42 (452 aa).

Residues 4–93 form a head region; it reads TTSVRQFSTS…GVSDALLGGS (90 aa). Residues 94-129 are coil 1A; the sequence is EKETMQNLNDRLATYLDRVRALEEANADLEVKIREW. The 312-residue stretch at 94-405 folds into the IF rod domain; that stretch reads EKETMQNLND…RLLEGEDAHL (312 aa). The interval 130 to 147 is linker 1; the sequence is YKKQGPGPARDYSPYFKT. A coil 1B region spans residues 148-239; it reads IEDLRNKILA…KNHEEEMNAL (92 aa). Positions 240–262 are linker 12; the sequence is RGQVGGDVNVEMDAAPGVDLSRI. The interval 263–401 is coil 2; it reads LNEMRDQYEK…ATYRRLLEGE (139 aa). Residues 402–452 are tail; the sequence is DAHLATQYSSSLASQPSREGMVTSRQVRTIVEEVQDGKVVSSREQVHRSTH.

This sequence belongs to the intermediate filament family. In terms of assembly, heterodimer of a type I and a type II keratin. Colocalizes with KRT8/KRT18 filament network. In terms of tissue distribution, expressed in nail matrix and nail bed epithelium (at protein level). Also expressed in tongue and digits with weak expression in vibrissae and in both filiform and fungiform papillae of oral mucosa.

The protein resides in the cytoplasm. In Mus musculus (Mouse), this protein is Keratin, type I cytoskeletal 42.